Reading from the N-terminus, the 101-residue chain is Small ribosomal subunit protein bS18c (101 aa).

This sequence belongs to the bacterial ribosomal protein bS18 family. Component of the chloroplast small ribosomal subunit (SSU). Mature 70S chloroplast ribosomes of higher plants consist of a small (30S) and a large (50S) subunit. The 30S small subunit contains 1 molecule of ribosomal RNA (16S rRNA) and 24 different proteins. The 50S large subunit contains 3 rRNA molecules (23S, 5S and 4.5S rRNA) and 33 different proteins.

Its subcellular location is the plastid. It is found in the chloroplast. In terms of biological role, component of the chloroplast ribosome (chloro-ribosome), a dedicated translation machinery responsible for the synthesis of chloroplast genome-encoded proteins, including proteins of the transcription and translation machinery and components of the photosynthetic apparatus. This is Small ribosomal subunit protein bS18c (RPS18) from Spinacia oleracea (Spinach).